The primary structure comprises 321 residues: Nucleotide-binding protein LI0459 (321 aa).

41–48 (GMSGAGKS) is an ATP binding site.

The protein belongs to the RapZ-like family.

Displays ATPase and GTPase activities. The polypeptide is Nucleotide-binding protein LI0459 (Lawsonia intracellularis (strain PHE/MN1-00)).